We begin with the raw amino-acid sequence, 454 residues long: Elongation factor Tu, mitochondrial (454 aa).

The N-terminal 51 residues, 1–51 (MASVVLRNPSSKRLVPFSSQIYSRCGASVTSSYSISHSIGGDDLSSSTFGT), are a transit peptide targeting the mitochondrion. Residues 65–261 (KPHVNVGTIG…AVDEYIPDPV (197 aa)) form the tr-type G domain. The G1 stretch occupies residues 74 to 81 (GHVDHGKT). 74 to 81 (GHVDHGKT) contacts GTP. Thr-82 carries the post-translational modification Phosphothreonine. The interval 115 to 119 (GITIA) is G2. Residues 136-139 (DCPG) form a G3 region. Residues 136–140 (DCPGH) and 191–194 (NKVD) contribute to the GTP site. Positions 191 to 194 (NKVD) are G4. The interval 229–231 (SAL) is G5.

This sequence belongs to the TRAFAC class translation factor GTPase superfamily. Classic translation factor GTPase family. EF-Tu/EF-1A subfamily.

It localises to the mitochondrion. Functionally, this protein promotes the GTP-dependent binding of aminoacyl-tRNA to the A-site of ribosomes during protein biosynthesis. In Arabidopsis thaliana (Mouse-ear cress), this protein is Elongation factor Tu, mitochondrial (TUFA).